The sequence spans 448 residues: Tubulin alpha-4A chain (448 aa).

The short motif at 1-4 (MREC) is the MREC motif element. A GTP-binding site is contributed by glutamine 11. Lysine 40 carries the N6-acetyllysine modification. Serine 48 is subject to Phosphoserine. Glutamate 71 lines the GTP pocket. A Mg(2+)-binding site is contributed by glutamate 71. Tyrosine 83 is subject to 3'-nitrotyrosine. The GTP site is built by serine 140, glycine 144, threonine 145, threonine 179, asparagine 206, and asparagine 228. Glutamate 254 is an active-site residue. At tyrosine 432 the chain carries Phosphotyrosine. Serine 439 carries the post-translational modification Phosphoserine.

It belongs to the tubulin family. Dimer of alpha and beta chains. A typical microtubule is a hollow water-filled tube with an outer diameter of 25 nm and an inner diameter of 15 nM. Alpha-beta heterodimers associate head-to-tail to form protofilaments running lengthwise along the microtubule wall with the beta-tubulin subunit facing the microtubule plus end conferring a structural polarity. Microtubules usually have 13 protofilaments but different protofilament numbers can be found in some organisms and specialized cells. Interacts with CFAP157. Requires Mg(2+) as cofactor. Some glutamate residues at the C-terminus are polyglycylated, resulting in polyglycine chains on the gamma-carboxyl group. Glycylation is mainly limited to tubulin incorporated into axonemes (cilia and flagella) whereas glutamylation is prevalent in neuronal cells, centrioles, axonemes, and the mitotic spindle. Both modifications can coexist on the same protein on adjacent residues, and lowering polyglycylation levels increases polyglutamylation, and reciprocally. Cilia and flagella glycylation is required for their stability and maintenance. Flagella glycylation controls sperm motility. In terms of processing, some glutamate residues at the C-terminus are polyglutamylated, resulting in polyglutamate chains on the gamma-carboxyl group. Polyglutamylation plays a key role in microtubule severing by spastin (SPAST). SPAST preferentially recognizes and acts on microtubules decorated with short polyglutamate tails: severing activity by SPAST increases as the number of glutamates per tubulin rises from one to eight, but decreases beyond this glutamylation threshold. Glutamylation is also involved in cilia motility. Post-translationally, acetylation of alpha chains at Lys-40 is located inside the microtubule lumen. This modification has been correlated with increased microtubule stability, intracellular transport and ciliary assembly. Methylation of alpha chains at Lys-40 is found in mitotic microtubules and is required for normal mitosis and cytokinesis contributing to genomic stability. In terms of processing, although this tubulin does not encode a C-terminal tyrosine, a C-terminal tyrosine can be added post-translationally by the tubulin tyrosine ligase (TTL). It can then undergo a detyrosination cycle by the tubulin tyrosine carboxypeptidase (MATCAP1/KIAA0895L).

It localises to the cytoplasm. The protein resides in the cytoskeleton. The enzyme catalyses GTP + H2O = GDP + phosphate + H(+). Tubulin is the major constituent of microtubules, a cylinder consisting of laterally associated linear protofilaments composed of alpha- and beta-tubulin heterodimers. Microtubules grow by the addition of GTP-tubulin dimers to the microtubule end, where a stabilizing cap forms. Below the cap, tubulin dimers are in GDP-bound state, owing to GTPase activity of alpha-tubulin. In Macaca fascicularis (Crab-eating macaque), this protein is Tubulin alpha-4A chain (TUBA4A).